Reading from the N-terminus, the 258-residue chain is uncharacterized protein (258 aa).

Solcar repeat units follow at residues 9–78, 81–160, and 165–246; these read KPIL…AKAR, PGVR…FKKK, and DHVF…VKSH. The next 6 membrane-spanning stretches (helical) occupy residues 11 to 31, 53 to 73, 87 to 107, 139 to 159, 171 to 191, and 218 to 239; these read ILVG…LSTI, GLSS…FVYE, LVSA…AEVV, MCGR…QFKK, PKGA…LDVI, and FEKG…YLGT.

It belongs to the mitochondrial carrier (TC 2.A.29) family.

The protein localises to the mitochondrion inner membrane. This is an uncharacterized protein from Schizosaccharomyces pombe (strain 972 / ATCC 24843) (Fission yeast).